The following is a 501-amino-acid chain: UPF0616 protein C1687.04 (501 aa).

Belongs to the UPF0616 family.

The protein localises to the cytoplasm. It localises to the nucleus. In Schizosaccharomyces pombe (strain 972 / ATCC 24843) (Fission yeast), this protein is UPF0616 protein C1687.04.